A 140-amino-acid polypeptide reads, in one-letter code: MGRISGLVPSRFLTLLAHLVVVITLFWSRESNIQACLPLKFTPEEYEKQDNQLVAALCLTLGLFAVELAGFLSGVSMFNSTQSLLSIAAHCSASVALSFFVFERWECTTYWYIFTFCSAFPAVTETALFIAVFGLKKKPF.

2 helical membrane-spanning segments follow: residues 7–27 (LVPS…TLFW) and 53–73 (LVAA…GFLS). N79 carries N-linked (GlcNAc...) asparagine glycosylation. 2 helical membrane passes run 83 to 103 (SLLS…FVFE) and 113 to 133 (IFTF…IAVF).

In terms of assembly, part of the tectonic-like complex (also named B9 complex). Interacts with TMEM237, TMEM231, MKS1 and TMEM216.

The protein resides in the membrane. Its subcellular location is the cell projection. The protein localises to the cilium. In terms of biological role, plays a role in cilia formation and embryonic patterning. Requires for normal Sonic hedgehog (Shh) signaling in the neural tube and acts in combination with GLI2 and GLI3 to pattern ventral and intermediate neuronal cell types. During ciliogenesis regulates the ciliary transition zone localization of some MKS complex proteins. This is Transmembrane protein 107 from Mus musculus (Mouse).